We begin with the raw amino-acid sequence, 1192 residues long: Methionine synthase (1192 aa).

Residues 1-312 form the Hcy-binding domain; the sequence is MTAADKHLYD…AHIREVAAAV (312 aa). The Zn(2+) site is built by Cys-231, Cys-297, and Cys-298. Positions 343 to 601 constitute a Pterin-binding domain; sequence VLVIGERTNA…RIPEEQRNVA (259 aa). In terms of domain architecture, B12-binding N-terminal spans 635-728; that stretch reads RLAELAGLPL…HMERSDDDSG (94 aa). The B12-binding domain maps to 729-866; that stretch reads KGRIVLATVK…SAKRGEAPDE (138 aa). Residues 739-743, His-742, Ser-787, and Ala-845 each bind methylcob(III)alamin; that span reads GDVHD. The tract at residues 860–904 is disordered; it reads RGEAPDENSPEAIKAREKEAERKARHQRSKRIAAQRKAAEEPVEV. Basic and acidic residues predominate over residues 872 to 881; the sequence is IKAREKEAER. Basic residues predominate over residues 882 to 893; it reads KARHQRSKRIAA. One can recognise an AdoMet activation domain in the interval 893–1192; that stretch reads AQRKAAEEPV…HHPEAKYFNV (300 aa). S-adenosyl-L-methionine is bound by residues Asp-940, Arg-1135, and 1189-1190; that span reads YF.

It belongs to the vitamin-B12 dependent methionine synthase family. It depends on methylcob(III)alamin as a cofactor. The cofactor is Zn(2+).

It carries out the reaction (6S)-5-methyl-5,6,7,8-tetrahydrofolate + L-homocysteine = (6S)-5,6,7,8-tetrahydrofolate + L-methionine. It participates in amino-acid biosynthesis; L-methionine biosynthesis via de novo pathway; L-methionine from L-homocysteine (MetH route): step 1/1. Functionally, catalyzes the transfer of a methyl group from methyl-cobalamin to homocysteine, yielding enzyme-bound cob(I)alamin and methionine. Subsequently, remethylates the cofactor using methyltetrahydrofolate. This chain is Methionine synthase (metH), found in Mycobacterium tuberculosis (strain ATCC 25618 / H37Rv).